A 113-amino-acid polypeptide reads, in one-letter code: Iron-sulfur cluster insertion protein ErpA (113 aa).

The iron-sulfur cluster site is built by Cys41, Cys105, and Cys107.

It belongs to the HesB/IscA family. In terms of assembly, homodimer. The cofactor is iron-sulfur cluster.

In terms of biological role, required for insertion of 4Fe-4S clusters for at least IspG. The sequence is that of Iron-sulfur cluster insertion protein ErpA from Colwellia psychrerythraea (strain 34H / ATCC BAA-681) (Vibrio psychroerythus).